We begin with the raw amino-acid sequence, 243 residues long: HTH-type quorum sensing-dependent transcriptional regulator RpaR (243 aa).

The HTH luxR-type domain maps to 174 to 239 (KPIRRNRLTP…AAVAKALTLG (66 aa)). A DNA-binding region (H-T-H motif) is located at residues 198 to 217 (AWEISVILCITERTVKFHLI).

The protein belongs to the autoinducer-regulated transcriptional regulatory protein family.

Its function is as follows. Responds to the quorum-sensing autoinducer 4-coumaroyl-homoserine lactone to regulate expression of several genes. Represses expression of rpaI in the absence of the inducer. The protein is HTH-type quorum sensing-dependent transcriptional regulator RpaR of Rhodopseudomonas palustris (strain ATCC BAA-98 / CGA009).